The following is a 247-amino-acid chain: DNA-directed RNA polymerase subunit Rpo3 (247 aa).

It belongs to the archaeal Rpo3/eukaryotic RPB3 RNA polymerase subunit family. As to quaternary structure, part of the RNA polymerase complex.

It is found in the cytoplasm. It catalyses the reaction RNA(n) + a ribonucleoside 5'-triphosphate = RNA(n+1) + diphosphate. Functionally, DNA-dependent RNA polymerase (RNAP) catalyzes the transcription of DNA into RNA using the four ribonucleoside triphosphates as substrates. The polypeptide is DNA-directed RNA polymerase subunit Rpo3 (Natronomonas pharaonis (strain ATCC 35678 / DSM 2160 / CIP 103997 / JCM 8858 / NBRC 14720 / NCIMB 2260 / Gabara) (Halobacterium pharaonis)).